The sequence spans 399 residues: Tyrosine--tRNA ligase (399 aa).

Positions Pro-42–His-51 match the 'HIGH' region motif. The 'KMSKS' region signature appears at Lys-226 to Ser-230. Lys-229 lines the ATP pocket. The 62-residue stretch at Ile-337–Val-398 folds into the S4 RNA-binding domain.

The protein belongs to the class-I aminoacyl-tRNA synthetase family. TyrS type 2 subfamily. In terms of assembly, homodimer.

Its subcellular location is the cytoplasm. The enzyme catalyses tRNA(Tyr) + L-tyrosine + ATP = L-tyrosyl-tRNA(Tyr) + AMP + diphosphate + H(+). Functionally, catalyzes the attachment of tyrosine to tRNA(Tyr) in a two-step reaction: tyrosine is first activated by ATP to form Tyr-AMP and then transferred to the acceptor end of tRNA(Tyr). This is Tyrosine--tRNA ligase from Colwellia psychrerythraea (strain 34H / ATCC BAA-681) (Vibrio psychroerythus).